Here is a 62-residue protein sequence, read N- to C-terminus: Conorfamide-Tx1 (62 aa).

A signal peptide spans 1 to 19 (MSGRGFLLLALLLLVTVEA). Positions 20 to 26 (TKVEKNK) are excised as a propeptide. Residue Tyr-46 is modified to Tyrosine amide. The propeptide occupies 47-62 (GRRDMQSPLLSERLRF).

This sequence belongs to the FARP (FMRFamide related peptide) family. In terms of tissue distribution, expressed by the venom duct.

It localises to the secreted. Its function is as follows. This peptide does not show activity on human and mouse sensory neuron-specific G-protein coupled receptors MRGPRX1. The chain is Conorfamide-Tx1 from Conus textile (Cloth-of-gold cone).